The chain runs to 788 residues: Bifunctional purine biosynthetic protein ADE1 (788 aa).

Residues 1–430 (MEPIIALLIG…DIAHHALNPK (430 aa)) are GARS. In terms of domain architecture, ATP-grasp spans 115 to 321 (KDFMHRNNIP…LAEIILACVN (207 aa)). 141–202 (LDTCTFDVVI…EELLEGEELS (62 aa)) serves as a coordination point for ATP. Glu-291 and Asn-293 together coordinate Mg(2+). Residues 437–769 (LTYENSGVSV…TVYRIGQLVD (333 aa)) are AIRS.

It in the N-terminal section; belongs to the GARS family. In the C-terminal section; belongs to the AIR synthase family. Requires Mg(2+) as cofactor. Mn(2+) is required as a cofactor.

It is found in the cytoplasm. The protein localises to the cytosol. It catalyses the reaction 5-phospho-beta-D-ribosylamine + glycine + ATP = N(1)-(5-phospho-beta-D-ribosyl)glycinamide + ADP + phosphate + H(+). The catalysed reaction is 2-formamido-N(1)-(5-O-phospho-beta-D-ribosyl)acetamidine + ATP = 5-amino-1-(5-phospho-beta-D-ribosyl)imidazole + ADP + phosphate + H(+). It functions in the pathway purine metabolism; IMP biosynthesis via de novo pathway; 5-amino-1-(5-phospho-D-ribosyl)imidazole from N(2)-formyl-N(1)-(5-phospho-D-ribosyl)glycinamide: step 2/2. The protein operates within purine metabolism; IMP biosynthesis via de novo pathway; N(1)-(5-phospho-D-ribosyl)glycinamide from 5-phospho-alpha-D-ribose 1-diphosphate: step 2/2. In terms of biological role, catalyzes the second and fifth step in the 'de novo' purine biosynthesis pathway; contains phosphoribosylamine--glycine ligase (GARS) and phosphoribosylformylglycinamidine cyclo-ligase (AIRS) activities. This is Bifunctional purine biosynthetic protein ADE1 from Schizosaccharomyces pombe (strain 972 / ATCC 24843) (Fission yeast).